Consider the following 415-residue polypeptide: Fructose-like permease IIC component 1 (415 aa).

At methionine 1 to methionine 46 the chain is on the cytoplasmic side. The region spanning leucine 35–leucine 410 is the PTS EIIC type-2 domain. A helical membrane pass occupies residues valine 47–tryptophan 67. Over leucine 68–serine 101 the chain is Periplasmic. The chain crosses the membrane as a helical span at residues phenylalanine 102–isoleucine 122. The Cytoplasmic portion of the chain corresponds to glycine 123 to leucine 126. A helical transmembrane segment spans residues alanine 127–phenylalanine 147. Over aspartate 148–serine 157 the chain is Periplasmic. A helical transmembrane segment spans residues serine 158–valine 178. Topologically, residues lysine 179–threonine 197 are cytoplasmic. The helical transmembrane segment at phenylalanine 198–proline 218 threads the bilayer. Residues phenylalanine 219–lysine 237 are Periplasmic-facing. A helical transmembrane segment spans residues glycine 238–isoleucine 258. At asparagine 259–proline 276 the chain is on the cytoplasmic side. Residues valine 277–isoleucine 297 traverse the membrane as a helical segment. Residues aspartate 298–alanine 318 are Periplasmic-facing. Residues methionine 319–isoleucine 339 form a helical membrane-spanning segment. Topologically, residues threonine 340–alanine 341 are cytoplasmic. A helical transmembrane segment spans residues isoleucine 342–valine 362. At glutamine 363–asparagine 378 the chain is on the periplasmic side. The helical transmembrane segment at leucine 379–phenylalanine 399 threads the bilayer. Residues leucine 400–leucine 415 lie on the Cytoplasmic side of the membrane.

Its subcellular location is the cell inner membrane. Functionally, the phosphoenolpyruvate-dependent sugar phosphotransferase system (PTS), a major carbohydrate active -transport system, catalyzes the phosphorylation of incoming sugar substrates concomitant with their translocation across the cell membrane. This Escherichia coli (strain K12) protein is Fructose-like permease IIC component 1 (fryC).